The primary structure comprises 166 residues: Large ribosomal subunit protein bL19 (166 aa).

This sequence belongs to the bacterial ribosomal protein bL19 family. Part of the 50S ribosomal subunit. Forms a cluster with proteins L3 and L14.

Functionally, this protein is located at the 30S-50S ribosomal subunit interface and may play a role in the structure and function of the aminoacyl-tRNA binding site. Binds the 23S rRNA. The sequence is that of Large ribosomal subunit protein bL19 (rplS) from Deinococcus radiodurans (strain ATCC 13939 / DSM 20539 / JCM 16871 / CCUG 27074 / LMG 4051 / NBRC 15346 / NCIMB 9279 / VKM B-1422 / R1).